The sequence spans 474 residues: Alkylcitrate dehydratase phiI (474 aa).

It belongs to the PrpD family. As to quaternary structure, monomer.

The catalysed reaction is (4E,11E)-2-hydroxytrideca-4,11-dien-1,2,3-tricarboxylate + 2 H(+) = [4-(deca-1,8-diyl)-2,5-dioxo-2,5-dihydro-3-furanyl]acetate + 2 H2O. It participates in secondary metabolite biosynthesis. Its function is as follows. Alkylcitrate dehydratasee; part of the gene cluster that mediates the biosynthesis of the antihypercholesterolemic agents phomoidrides which are dimeric anhydrides. Within the pathway, the alkylcitrate synthase (ACS) tstiJ and the alkylcitrate dehydratase (ACDH) tstI produce the decarboxylated monomeric anhydrides by coupling the C12-fatty acyl product from phiA with oxalacetic acid. The pathway begins with the highly reducing polyketide synthase tstA that catalyzes the formation of a C12-fatty acyl-ACP, starting from one acetate and 5 malonate units. The hydrolase tstM is involved in the release of the C12-fatty acyl chain from phiA. The alkylcitrate synthase (ACS) tstJ and the alkylcitrate dehydratase (ACDH) tstI then give rise to decarboxylated monomeric anhydrides by coupling the C12-fatty acyl chain with oxalacetic acid. The cyclase tstC is responsible for the dimerization of the monomeric anhydrides which leads to the production of prephomoidride that contains the characteristic bicyclo[4.3.1]deca-1,6-diene system of phomoidrides. Iterative oxidation catalyzed by the alpha-ketoglutarate-dependent dioxygenase tstK produced then phomoidride A. Finally, the methyltransferase tstE converts phomoidride A to phomoidride B via an acetalization reaction. The phosphatidylethanolamine-binding protein tstB and tstN are not essential for dimerization and their functions have still to be determined. In Talaromyces stipitatus (strain ATCC 10500 / CBS 375.48 / QM 6759 / NRRL 1006) (Penicillium stipitatum), this protein is Alkylcitrate dehydratase phiI.